The chain runs to 435 residues: Asparagine--tRNA ligase (435 aa).

It belongs to the class-II aminoacyl-tRNA synthetase family. Homodimer.

The protein resides in the cytoplasm. The enzyme catalyses tRNA(Asn) + L-asparagine + ATP = L-asparaginyl-tRNA(Asn) + AMP + diphosphate + H(+). The sequence is that of Asparagine--tRNA ligase from Leptospira borgpetersenii serovar Hardjo-bovis (strain JB197).